The primary structure comprises 61 residues: Photosystem II reaction center protein K (61 aa).

Positions 1-24 are excised as a propeptide; that stretch reads MLNIFSLICICLNSVLYSSSFFVA. The chain crosses the membrane as a helical span at residues 40-60; sequence MPVIPVLFFLLAFVWQAAVSF.

Belongs to the PsbK family. As to quaternary structure, PSII is composed of 1 copy each of membrane proteins PsbA, PsbB, PsbC, PsbD, PsbE, PsbF, PsbH, PsbI, PsbJ, PsbK, PsbL, PsbM, PsbT, PsbX, PsbY, PsbZ, Psb30/Ycf12, at least 3 peripheral proteins of the oxygen-evolving complex and a large number of cofactors. It forms dimeric complexes.

It is found in the plastid. The protein resides in the chloroplast thylakoid membrane. Its function is as follows. One of the components of the core complex of photosystem II (PSII). PSII is a light-driven water:plastoquinone oxidoreductase that uses light energy to abstract electrons from H(2)O, generating O(2) and a proton gradient subsequently used for ATP formation. It consists of a core antenna complex that captures photons, and an electron transfer chain that converts photonic excitation into a charge separation. The sequence is that of Photosystem II reaction center protein K from Morus indica (Mulberry).